Consider the following 203-residue polypeptide: ATP-dependent Clp protease proteolytic subunit (203 aa).

Ser107 serves as the catalytic Nucleophile. Residue His132 is part of the active site.

Belongs to the peptidase S14 family. As to quaternary structure, fourteen ClpP subunits assemble into 2 heptameric rings which stack back to back to give a disk-like structure with a central cavity, resembling the structure of eukaryotic proteasomes.

The protein localises to the cytoplasm. It catalyses the reaction Hydrolysis of proteins to small peptides in the presence of ATP and magnesium. alpha-casein is the usual test substrate. In the absence of ATP, only oligopeptides shorter than five residues are hydrolyzed (such as succinyl-Leu-Tyr-|-NHMec, and Leu-Tyr-Leu-|-Tyr-Trp, in which cleavage of the -Tyr-|-Leu- and -Tyr-|-Trp bonds also occurs).. Cleaves peptides in various proteins in a process that requires ATP hydrolysis. Has a chymotrypsin-like activity. Plays a major role in the degradation of misfolded proteins. This is ATP-dependent Clp protease proteolytic subunit from Thermotoga maritima (strain ATCC 43589 / DSM 3109 / JCM 10099 / NBRC 100826 / MSB8).